The following is a 215-amino-acid chain: Ribonuclease HII (215 aa).

The region spanning 19–213 is the RNase H type-2 domain; the sequence is QTVAGVDEVG…SLRQPSQQID (195 aa). A divalent metal cation is bound by residues Asp-25, Glu-26, and Asp-121.

This sequence belongs to the RNase HII family. Mn(2+) serves as cofactor. Mg(2+) is required as a cofactor.

It localises to the cytoplasm. The enzyme catalyses Endonucleolytic cleavage to 5'-phosphomonoester.. Its function is as follows. Endonuclease that specifically degrades the RNA of RNA-DNA hybrids. The protein is Ribonuclease HII of Synechococcus elongatus (strain ATCC 33912 / PCC 7942 / FACHB-805) (Anacystis nidulans R2).